Here is a 469-residue protein sequence, read N- to C-terminus: Cysteine--tRNA ligase (469 aa).

Cys28 provides a ligand contact to Zn(2+). A 'HIGH' region motif is present at residues Pro30 to Asn40. Zn(2+) is bound by residues Cys213, His238, and Glu242. The 'KMSKS' region signature appears at Lys270–Ser274. Lys273 serves as a coordination point for ATP.

This sequence belongs to the class-I aminoacyl-tRNA synthetase family. Monomer. It depends on Zn(2+) as a cofactor.

Its subcellular location is the cytoplasm. The catalysed reaction is tRNA(Cys) + L-cysteine + ATP = L-cysteinyl-tRNA(Cys) + AMP + diphosphate. The polypeptide is Cysteine--tRNA ligase (Leuconostoc citreum (strain KM20)).